A 236-amino-acid chain; its full sequence is Phosphoglycolate phosphatase (236 aa).

The active-site Nucleophile is the Asp14. Residues Asp14, Asp16, and Asp177 each coordinate Mg(2+).

The protein belongs to the HAD-like hydrolase superfamily. CbbY/CbbZ/Gph/YieH family. It depends on Mg(2+) as a cofactor.

The catalysed reaction is 2-phosphoglycolate + H2O = glycolate + phosphate. Its pathway is organic acid metabolism; glycolate biosynthesis; glycolate from 2-phosphoglycolate: step 1/1. Specifically catalyzes the dephosphorylation of 2-phosphoglycolate. Is involved in the dissimilation of the intracellular 2-phosphoglycolate formed during the DNA repair of 3'-phosphoglycolate ends, a major class of DNA lesions induced by oxidative stress. The sequence is that of Phosphoglycolate phosphatase from Neisseria gonorrhoeae (strain ATCC 700825 / FA 1090).